The primary structure comprises 375 residues: Tyrosine--tRNA ligase (375 aa).

The L-tyrosine site is built by Tyr-37, Tyr-168, Gln-172, Asp-175, and Gln-190. A 'KMSKS' region motif is present at residues 251–255; it reads KMSKS. Lys-254 lines the ATP pocket.

Belongs to the class-I aminoacyl-tRNA synthetase family. TyrS type 4 subfamily. Homodimer.

The protein resides in the cytoplasm. The catalysed reaction is tRNA(Tyr) + L-tyrosine + ATP = L-tyrosyl-tRNA(Tyr) + AMP + diphosphate + H(+). Catalyzes the attachment of tyrosine to tRNA(Tyr) in a two-step reaction: tyrosine is first activated by ATP to form Tyr-AMP and then transferred to the acceptor end of tRNA(Tyr). In Thermococcus gammatolerans (strain DSM 15229 / JCM 11827 / EJ3), this protein is Tyrosine--tRNA ligase.